A 59-amino-acid chain; its full sequence is ATP synthase subunit J, mitochondrial (59 aa).

The chain crosses the membrane as a helical span at residues 9–25 (ILKVYWPFFVAGAAVYY).

This sequence belongs to the ATPase j subunit family. As to quaternary structure, F-type ATPases have 2 components, CF(1) - the catalytic core - and CF(0) - the membrane proton channel. In yeast, the dimeric form of ATP synthase consists of 17 polypeptides: alpha, beta, gamma, delta, epsilon, 4 (B), 5 (OSCP), 6 (A), 8, 9 (C), d, E (Tim11), f, g, h, i/j and k.

It localises to the mitochondrion membrane. Mitochondrial membrane ATP synthase (F(1)F(0) ATP synthase or Complex V) produces ATP from ADP in the presence of a proton gradient across the membrane which is generated by electron transport complexes of the respiratory chain. F-type ATPases consist of two structural domains, F(1) - containing the extramembraneous catalytic core and F(0) - containing the membrane proton channel, linked together by a central stalk and a peripheral stalk. During catalysis, ATP synthesis in the catalytic domain of F(1) is coupled via a rotary mechanism of the central stalk subunits to proton translocation. Part of the complex F(0) domain. Minor subunit located with subunit a in the membrane. The sequence is that of ATP synthase subunit J, mitochondrial (ATP18) from Saccharomyces cerevisiae (strain ATCC 204508 / S288c) (Baker's yeast).